The sequence spans 158 residues: Transcription elongation factor GreA (158 aa).

This sequence belongs to the GreA/GreB family.

Functionally, necessary for efficient RNA polymerase transcription elongation past template-encoded arresting sites. The arresting sites in DNA have the property of trapping a certain fraction of elongating RNA polymerases that pass through, resulting in locked ternary complexes. Cleavage of the nascent transcript by cleavage factors such as GreA or GreB allows the resumption of elongation from the new 3'terminus. GreA releases sequences of 2 to 3 nucleotides. In Bacillus licheniformis (strain ATCC 14580 / DSM 13 / JCM 2505 / CCUG 7422 / NBRC 12200 / NCIMB 9375 / NCTC 10341 / NRRL NRS-1264 / Gibson 46), this protein is Transcription elongation factor GreA.